Consider the following 530-residue polypeptide: MSQLDTTTPSGDYLMALDAGTGSVRAVIFDLNGNQIAAGQAEWLHLPVPDVPGSMEFDLTTNWQLMCQCIRQALHLAKLPASAIRAVAACSMREGIVLYDRSGTPIWACANVDARASREVSELKELHNNGFELEVYQCSGQTLALSAMPRLLWLAHYRPDIYRQAGTLTMISDWLANMLSGELAVDPSNAGTTGMLDLVTRNWQPNLLEMAGLRADILSPVKETGTLLGHVTAKAAQECGLLAGTPVVMGGGDVQLGCLGLGVVHAGQTAVLGGTFWQQVVNLPQPIIDPNMNTRINPHVIPGMVQAESISFFTGLTMRWFRDAFCAEEKLLAQRLGIDTYSLLEDMAARVPAGAYGVMPIFSDVMRFKSWYHAAPSFINLSLDPEKCNKATLFRALEENAAIVSACNLAQIAEFSGVKASSVVFAGGGAKGKLWSQILADVTGVPVKVPVVKEATALGCAIAAGVGVGLYEALDKTGERLVRWEREYIPNTEHKALYQAAKTNWQAVYTDQLGLVDCGLTTSLWKAPGL.

Belongs to the FGGY kinase family.

It is found in the cytoplasm. It catalyses the reaction (S)-4,5-dihydroxypentane-2,3-dione + ATP = (2S)-2-hydroxy-3,4-dioxopentyl phosphate + ADP + H(+). Functionally, catalyzes the phosphorylation of autoinducer-2 (AI-2) to phospho-AI-2, which subsequently inactivates the transcriptional regulator LsrR and leads to the transcription of the lsr operon. Phosphorylates the ring-open form of (S)-4,5-dihydroxypentane-2,3-dione (DPD), which is the precursor to all AI-2 signaling molecules, at the C5 position. The protein is Autoinducer-2 kinase of Yersinia pseudotuberculosis serotype O:3 (strain YPIII).